The sequence spans 134 residues: Complexin-1 (134 aa).

Disordered regions lie at residues M1 to E60 and K74 to D113. The span at D15–E60 shows a compositional bias: basic and acidic residues. Residues D29–K69 adopt a coiled-coil conformation. An interaction with the SNARE complex region spans residues R48 to Y70.

This sequence belongs to the complexin/synaphin family. In terms of assembly, binds to the SNARE core complex containing SNAP25, VAMP2 and STX1A. Nervous system. In hippocampus and cerebellum, expressed mainly by inhibitory neurons. Overexpressed in substantia nigra from patients with Parkinson disease.

It is found in the cytoplasm. It localises to the cytosol. Its subcellular location is the perikaryon. The protein resides in the presynapse. In terms of biological role, positively regulates a late step in exocytosis of various cytoplasmic vesicles, such as synaptic vesicles and other secretory vesicles. Organizes the SNAREs into a cross-linked zigzag topology that, when interposed between the vesicle and plasma membranes, is incompatible with fusion, thereby preventing SNAREs from releasing neurotransmitters until an action potential arrives at the synapse. Also involved in glucose-induced secretion of insulin by pancreatic beta-cells. Essential for motor behavior. The protein is Complexin-1 (CPLX1) of Homo sapiens (Human).